We begin with the raw amino-acid sequence, 950 residues long: Serine/threonine-protein kinase atg1 (950 aa).

The region spanning 6–311 is the Protein kinase domain; it reads YTRLDEIGRG…FPDFFENGVI (306 aa). Residues 12–20 and Lys35 contribute to the ATP site; that span reads IGRGSFATV. Catalysis depends on Asp149, which acts as the Proton acceptor. Disordered regions lie at residues 314 to 425, 443 to 467, 505 to 570, 671 to 690, and 926 to 950; these read PIPG…HATA, RQRG…LREE, QGGI…QSPT, VQTD…NPDS, and PTPS…TPPK. 3 stretches are compositionally biased toward polar residues: residues 370–389, 447–458, and 511–520; these read GLTQ…PTTT, RNTFSEGSPQTD, and GAQTGALSRR. Over residues 549-565 the composition is skewed to basic and acidic residues; it reads SRADSMHNRQSSYERRY.

Belongs to the protein kinase superfamily. Ser/Thr protein kinase family. APG1/unc-51/ULK1 subfamily. In terms of assembly, homodimer. Forms a ternary complex with ATG13 and ATG17.

It is found in the cytoplasm. It localises to the preautophagosomal structure membrane. It carries out the reaction L-seryl-[protein] + ATP = O-phospho-L-seryl-[protein] + ADP + H(+). The enzyme catalyses L-threonyl-[protein] + ATP = O-phospho-L-threonyl-[protein] + ADP + H(+). Its function is as follows. Serine/threonine protein kinase involved in the cytoplasm to vacuole transport (Cvt) and found to be essential in autophagy, where it is required for the formation of autophagosomes. Involved in the clearance of protein aggregates which cannot be efficiently cleared by the proteasome. Required for selective autophagic degradation of the nucleus (nucleophagy) as well as for mitophagy which contributes to regulate mitochondrial quantity and quality by eliminating the mitochondria to a basal level to fulfill cellular energy requirements and preventing excess ROS production. Also involved in endoplasmic reticulum-specific autophagic process, in selective removal of ER-associated degradation (ERAD) substrates. Plays a key role in ATG9 and ATG23 cycling through the pre-autophagosomal structure and is necessary to promote ATG18 binding to ATG9 through phosphorylation of ATG9. Catalyzes phosphorylation of ATG4, decreasing the interaction between ATG4 and ATG8 and impairing deconjugation of PE-conjugated forms of ATG8. The polypeptide is Serine/threonine-protein kinase atg1 (Neosartorya fischeri (strain ATCC 1020 / DSM 3700 / CBS 544.65 / FGSC A1164 / JCM 1740 / NRRL 181 / WB 181) (Aspergillus fischerianus)).